A 509-amino-acid polypeptide reads, in one-letter code: Probable Xaa-Pro aminopeptidase MAC_04092 (509 aa).

Mn(2+)-binding residues include D273, D284, E437, and E478.

Belongs to the peptidase M24B family. It depends on Mn(2+) as a cofactor.

It carries out the reaction Release of any N-terminal amino acid, including proline, that is linked to proline, even from a dipeptide or tripeptide.. Catalyzes the removal of a penultimate prolyl residue from the N-termini of peptides. This chain is Probable Xaa-Pro aminopeptidase MAC_04092, found in Metarhizium acridum (strain CQMa 102).